The sequence spans 1436 residues: Gag-Pol polyprotein (1436 aa).

Gly-2 is lipidated: N-myristoyl glycine; by host. Residues 7 to 31 (VLSGGKLDAWEKIRLRPGGRKKYRL) are interaction with Gp41. An interaction with host CALM1 region spans residues 8–43 (LSGGKLDAWEKIRLRPGGRKKYRLKHLVWASRELER). Residues 12 to 19 (KLDAWEKI) form an interaction with host AP3D1 region. An interaction with membrane phosphatidylinositol 4,5-bisphosphate and RNA region spans residues 14–33 (DAWEKIRLRPGGRKKYRLKH). The Nuclear export signal signature appears at 16-22 (WEKIRLR). The Nuclear localization signal signature appears at 26–32 (RKKYRLK). Residues 73-77 (EDLQS) are interaction with membrane phosphatidylinositol 4,5-bisphosphate. Residues 110-129 (KNKQRTQQAPAAADKEKDSK) are disordered. At Tyr-134 the chain carries Phosphotyrosine; by host. The interaction with human PPIA/CYPA and NUP153 stretch occupies residues 191-229 (NTVGGHQAAMQMLKDTINEEAAEWDRLHPVHAGPIPPGQ). The dimerization/Multimerization of capsid protein p24 stretch occupies residues 279 to 365 (YSPVSILDIK…GGPSHKARVL (87 aa)). CCHC-type zinc fingers lie at residues 393–410 (VKCSNCGKEGHIARNCRA) and 414–431 (KGCWKCGQEGHQMKDCTG). 2 stretches are compositionally biased toward basic and acidic residues: residues 447-457 (KAREFPPEEAR) and 464-475 (RELRVRRGDHPL). The interval 447-482 (KAREFPPEEARANSPTSRELRVRRGDHPLSEAGAER) is disordered. The dimerization of protease stretch occupies residues 490-494 (PQITL). The Peptidase A2 domain occupies 509-578 (KEALLDTGAD…TPVNIIGRNI (70 aa)). Asp-514 acts as the For protease activity; shared with dimeric partner in catalysis. Dimerization of protease regions lie at residues 538-544 (GIGGFIK) and 577-589 (NILTQMGCTLNLP). The 191-residue stretch at 632–822 (EGKISKIGPE…PPFLWMGYEL (191 aa)) folds into the Reverse transcriptase domain. Mg(2+) contacts are provided by Asp-698, Asp-773, and Asp-774. Residues 815 to 823 (FLWMGYELH) form an RT 'primer grip' region. A Tryptophan repeat motif motif is present at residues 986 to 1002 (WETWWTEHWQATWIPEW). In terms of domain architecture, RNase H type-1 spans 1022–1145 (IEGAETYYVD…VDKLVSSGIR (124 aa)). Mg(2+) contacts are provided by Asp-1031, Glu-1066, Asp-1086, and Asp-1137. An Integrase-type zinc finger spans residues 1151 to 1192 (DGIDKAQVQHEKYHSNWRAMASDFNLPPIVAKEIVASCDKCQ). Zn(2+) contacts are provided by His-1160, His-1164, Cys-1188, and Cys-1191. Residues 1202 to 1352 (VDCSPGIWQL…SARERIIDII (151 aa)) enclose the Integrase catalytic domain. Asp-1212, Asp-1264, and Glu-1300 together coordinate Mg(2+). A DNA-binding region (integrase-type) is located at residues 1371–1418 (FRVYYRDSRDPIWKGPAKLLWKGEGAVVIQDNSEIKVVPRRKAKIIRD).

As to quaternary structure, homotrimer; further assembles as hexamers of trimers. Interacts with gp41 (via C-terminus). Interacts with host CALM1; this interaction induces a conformational change in the Matrix protein, triggering exposure of the myristate group. Interacts with host AP3D1; this interaction allows the polyprotein trafficking to multivesicular bodies during virus assembly. Part of the pre-integration complex (PIC) which is composed of viral genome, matrix protein, Vpr and integrase. In terms of assembly, homodimer; the homodimer further multimerizes as homohexamers or homopentamers. Interacts with human PPIA/CYPA; This interaction stabilizes the capsid. Interacts with human NUP153. Interacts with host PDZD8; this interaction stabilizes the capsid. Interacts with monkey TRIM5; this interaction destabilizes the capsid. Homodimer, whose active site consists of two apposed aspartic acid residues. As to quaternary structure, heterodimer of p66 RT and p51 RT (RT p66/p51). Heterodimerization of RT is essential for DNA polymerase activity. The overall folding of the subdomains is similar in p66 RT and p51 RT but the spatial arrangements of the subdomains are dramatically different. In terms of assembly, homotetramer; may further associate as a homohexadecamer. Part of the pre-integration complex (PIC) which is composed of viral genome, matrix protein, Vpr and integrase. Interacts with human SMARCB1/INI1 and human PSIP1/LEDGF isoform 1. Interacts with human KPNA3; this interaction might play a role in nuclear import of the pre-integration complex. Interacts with human NUP153; this interaction might play a role in nuclear import of the pre-integration complex. The cofactor is Mg(2+). Post-translationally, specific enzymatic cleavages by the viral protease yield mature proteins. The protease is released by autocatalytic cleavage. The polyprotein is cleaved during and after budding, this process is termed maturation. Proteolytic cleavage of p66 RT removes the RNase H domain to yield the p51 RT subunit. Nucleocapsid protein p7 might be further cleaved after virus entry. Tyrosine phosphorylated presumably in the virion by a host kinase. Phosphorylation is apparently not a major regulator of membrane association. In terms of processing, phosphorylated possibly by host MAPK1; this phosphorylation is necessary for Pin1-mediated virion uncoating. Post-translationally, methylated by host PRMT6, impairing its function by reducing RNA annealing and the initiation of reverse transcription.

It localises to the host cell membrane. The protein localises to the host endosome. Its subcellular location is the host multivesicular body. The protein resides in the virion membrane. It is found in the host nucleus. It localises to the host cytoplasm. The protein localises to the virion. The enzyme catalyses Specific for a P1 residue that is hydrophobic, and P1' variable, but often Pro.. It catalyses the reaction Endohydrolysis of RNA in RNA/DNA hybrids. Three different cleavage modes: 1. sequence-specific internal cleavage of RNA. Human immunodeficiency virus type 1 and Moloney murine leukemia virus enzymes prefer to cleave the RNA strand one nucleotide away from the RNA-DNA junction. 2. RNA 5'-end directed cleavage 13-19 nucleotides from the RNA end. 3. DNA 3'-end directed cleavage 15-20 nucleotides away from the primer terminus.. The catalysed reaction is 3'-end directed exonucleolytic cleavage of viral RNA-DNA hybrid.. It carries out the reaction DNA(n) + a 2'-deoxyribonucleoside 5'-triphosphate = DNA(n+1) + diphosphate. Protease: The viral protease is inhibited by many synthetic protease inhibitors (PIs), such as amprenavir, atazanavir, indinavir, loprinavir, nelfinavir, ritonavir and saquinavir. Use of protease inhibitors in tritherapy regimens permit more ambitious therapeutic strategies. Reverse transcriptase/ribonuclease H: RT can be inhibited either by nucleoside RT inhibitors (NRTIs) or by non nucleoside RT inhibitors (NNRTIs). NRTIs act as chain terminators, whereas NNRTIs inhibit DNA polymerization by binding a small hydrophobic pocket near the RT active site and inducing an allosteric change in this region. Classical NRTIs are abacavir, adefovir (PMEA), didanosine (ddI), lamivudine (3TC), stavudine (d4T), tenofovir (PMPA), zalcitabine (ddC), and zidovudine (AZT). Classical NNRTIs are atevirdine (BHAP U-87201E), delavirdine, efavirenz (DMP-266), emivirine (I-EBU), and nevirapine (BI-RG-587). The tritherapies used as a basic effective treatment of AIDS associate two NRTIs and one NNRTI. Its function is as follows. Mediates, with Gag polyprotein, the essential events in virion assembly, including binding the plasma membrane, making the protein-protein interactions necessary to create spherical particles, recruiting the viral Env proteins, and packaging the genomic RNA via direct interactions with the RNA packaging sequence (Psi). Gag-Pol polyprotein may regulate its own translation, by the binding genomic RNA in the 5'-UTR. At low concentration, the polyprotein would promote translation, whereas at high concentration, the polyprotein would encapsidate genomic RNA and then shut off translation. Functionally, targets the polyprotein to the plasma membrane via a multipartite membrane-binding signal, that includes its myristoylated N-terminus. Matrix protein is part of the pre-integration complex. Implicated in the release from host cell mediated by Vpu. Binds to RNA. Forms the conical core that encapsulates the genomic RNA-nucleocapsid complex in the virion. Most core are conical, with only 7% tubular. The core is constituted by capsid protein hexamer subunits. The core is disassembled soon after virion entry. Host restriction factors such as TRIM5-alpha or TRIMCyp bind retroviral capsids and cause premature capsid disassembly, leading to blocks in reverse transcription. Capsid restriction by TRIM5 is one of the factors which restricts HIV-1 to the human species. Host PIN1 apparently facilitates the virion uncoating. On the other hand, interactions with PDZD8 or CYPA stabilize the capsid. In terms of biological role, encapsulates and protects viral dimeric unspliced genomic RNA (gRNA). Binds these RNAs through its zinc fingers. Acts as a nucleic acid chaperone which is involved in rearangement of nucleic acid secondary structure during gRNA retrotranscription. Also facilitates template switch leading to recombination. As part of the polyprotein, participates in gRNA dimerization, packaging, tRNA incorporation and virion assembly. Its function is as follows. Aspartyl protease that mediates proteolytic cleavages of Gag and Gag-Pol polyproteins during or shortly after the release of the virion from the plasma membrane. Cleavages take place as an ordered, step-wise cascade to yield mature proteins. This process is called maturation. Displays maximal activity during the budding process just prior to particle release from the cell. Also cleaves Nef and Vif, probably concomitantly with viral structural proteins on maturation of virus particles. Hydrolyzes host EIF4GI and PABP1 in order to shut off the capped cellular mRNA translation. The resulting inhibition of cellular protein synthesis serves to ensure maximal viral gene expression and to evade host immune response. Also mediates cleavage of host YTHDF3. Mediates cleavage of host CARD8, thereby activating the CARD8 inflammasome, leading to the clearance of latent HIV-1 in patient CD4(+) T-cells after viral reactivation; in contrast, HIV-1 can evade CARD8-sensing when its protease remains inactive in infected cells prior to viral budding. Functionally, multifunctional enzyme that converts the viral RNA genome into dsDNA in the cytoplasm, shortly after virus entry into the cell. This enzyme displays a DNA polymerase activity that can copy either DNA or RNA templates, and a ribonuclease H (RNase H) activity that cleaves the RNA strand of RNA-DNA heteroduplexes in a partially processive 3' to 5' endonucleasic mode. Conversion of viral genomic RNA into dsDNA requires many steps. A tRNA(3)-Lys binds to the primer-binding site (PBS) situated at the 5'-end of the viral RNA. RT uses the 3' end of the tRNA primer to perform a short round of RNA-dependent minus-strand DNA synthesis. The reading proceeds through the U5 region and ends after the repeated (R) region which is present at both ends of viral RNA. The portion of the RNA-DNA heteroduplex is digested by the RNase H, resulting in a ssDNA product attached to the tRNA primer. This ssDNA/tRNA hybridizes with the identical R region situated at the 3' end of viral RNA. This template exchange, known as minus-strand DNA strong stop transfer, can be either intra- or intermolecular. RT uses the 3' end of this newly synthesized short ssDNA to perform the RNA-dependent minus-strand DNA synthesis of the whole template. RNase H digests the RNA template except for two polypurine tracts (PPTs) situated at the 5'-end and near the center of the genome. It is not clear if both polymerase and RNase H activities are simultaneous. RNase H probably can proceed both in a polymerase-dependent (RNA cut into small fragments by the same RT performing DNA synthesis) and a polymerase-independent mode (cleavage of remaining RNA fragments by free RTs). Secondly, RT performs DNA-directed plus-strand DNA synthesis using the PPTs that have not been removed by RNase H as primers. PPTs and tRNA primers are then removed by RNase H. The 3' and 5' ssDNA PBS regions hybridize to form a circular dsDNA intermediate. Strand displacement synthesis by RT to the PBS and PPT ends produces a blunt ended, linear dsDNA copy of the viral genome that includes long terminal repeats (LTRs) at both ends. Catalyzes viral DNA integration into the host chromosome, by performing a series of DNA cutting and joining reactions. This enzyme activity takes place after virion entry into a cell and reverse transcription of the RNA genome in dsDNA. The first step in the integration process is 3' processing. This step requires a complex comprising the viral genome, matrix protein, Vpr and integrase. This complex is called the pre-integration complex (PIC). The integrase protein removes 2 nucleotides from each 3' end of the viral DNA, leaving recessed CA OH's at the 3' ends. In the second step, the PIC enters cell nucleus. This process is mediated through integrase and Vpr proteins, and allows the virus to infect a non dividing cell. This ability to enter the nucleus is specific of lentiviruses, other retroviruses cannot and rely on cell division to access cell chromosomes. In the third step, termed strand transfer, the integrase protein joins the previously processed 3' ends to the 5' ends of strands of target cellular DNA at the site of integration. The 5'-ends are produced by integrase-catalyzed staggered cuts, 5 bp apart. A Y-shaped, gapped, recombination intermediate results, with the 5'-ends of the viral DNA strands and the 3' ends of target DNA strands remaining unjoined, flanking a gap of 5 bp. The last step is viral DNA integration into host chromosome. This involves host DNA repair synthesis in which the 5 bp gaps between the unjoined strands are filled in and then ligated. Since this process occurs at both cuts flanking the HIV genome, a 5 bp duplication of host DNA is produced at the ends of HIV-1 integration. Alternatively, Integrase may catalyze the excision of viral DNA just after strand transfer, this is termed disintegration. This chain is Gag-Pol polyprotein (gag-pol), found in Human immunodeficiency virus type 1 group M subtype H (isolate VI991) (HIV-1).